Reading from the N-terminus, the 1515-residue chain is Adhesion G protein-coupled receptor L1 (1515 aa).

The first 24 residues, 1-24 (MARLAAALWSLCVTTVLVTSATQG), serve as a signal peptide directing secretion. Residues 25-857 (LSRAGLPFGL…EIYQGRINEL (833 aa)) lie on the Extracellular side of the membrane. The 90-residue stretch at 40–129 (ACEGYPIELR…KYLEVQYDCV (90 aa)) folds into the SUEL-type lectin domain. Cystine bridges form between C41–C71, C50–C128, C83–C115, C96–C102, and C140–C322. E42 is a binding site for alpha-L-rhamnose. A glycan (N-linked (GlcNAc...) asparagine) is linked at N98. Position 117–120 (117–120 (GTYK)) interacts with alpha-L-rhamnose. An Olfactomedin-like domain is found at 139–398 (VCPGTLQKVL…VVRYSLEFGP (260 aa)). Positions 400-468 (DPSAGPATSP…APAPSTRRPP (69 aa)) are disordered. Over residues 405-441 (PATSPPLSTTTTARPTPLTSTASPAATTPLRRAPLTT) the composition is skewed to low complexity. Residues 453–468 (DLPPATAPAPSTRRPP) are compositionally biased toward pro residues. 2 disulfides stabilise this stretch: C480/C515 and C503/C532. 6 N-linked (GlcNAc...) asparagine glycosylation sites follow: N531, N640, N741, N800, N805, and N826. The GAIN-B domain maps to 669–850 (PARFLAAKQN…AVLMAHREIY (182 aa)). Disulfide bonds link C801-C832 and C820-C834. The interval 801 to 850 (CSFWNYSERSMLGYWSTQGCRLVESNKTHTTCACSHLTNFAVLMAHREIY) is GPS. A helical membrane pass occupies residues 858-878 (LLSVITWVGIVISLVCLAICI). Residues 879 to 892 (STFCFLRGLQTDRN) lie on the Cytoplasmic side of the membrane. A helical membrane pass occupies residues 893 to 913 (TIHKNLCINLFLAELLFLVGI). Topologically, residues 914 to 919 (DKTQYE) are extracellular. Residues 920–940 (VACPIFAGLLHYFFLAAFSWL) traverse the membrane as a helical segment. Topologically, residues 941–964 (CLEGVHLYLLLVEVFESEYSRTKY) are cytoplasmic. The chain crosses the membrane as a helical span at residues 965–985 (YYLGGYCFPALVVGIAAAIDY). Residues 986 to 1001 (RSYGTEKACWLRVDNY) are Extracellular-facing. A helical membrane pass occupies residues 1002–1022 (FIWSFIGPVSFVIVVNLVFLM). Residues 1023–1049 (VTLHKMIRSSSVLKPDSSRLDNIKSWA) lie on the Cytoplasmic side of the membrane. The helical transmembrane segment at 1050–1070 (LGAIALLFLLGLTWAFGLLFI) threads the bilayer. The Extracellular portion of the chain corresponds to 1071–1074 (NKES). A helical transmembrane segment spans residues 1075–1095 (VVMAYLFTTFNAFQGVFIFVF). Residues 1096-1515 (HCALQKKVHK…DGQMQLVTSL (420 aa)) are Cytoplasmic-facing. Residues 1144 to 1184 (TQVPGQGRHIHQVSLGPRGRSALPESQKDPGGQSGPGDPLT) are disordered. An Omega-N-methylarginine modification is found at R1237. S1263 carries the post-translational modification Phosphoserine. Disordered stretches follow at residues 1291 to 1316 (FNNSYSLRSGDFPPGDGGPEPPRGRN), 1337 to 1369 (RGASGGAKGPPPEPPVPPVPGVSEDEAGGPGGA), 1401 to 1470 (ESES…SRPP), and 1492 to 1515 (YLAAPSLEGPGPDGDGQMQLVTSL). Pro residues-rich tracts occupy residues 1345–1356 (GPPPEPPVPPVP) and 1449–1461 (ALPPPPPAPPGPP). Phosphoserine is present on residues S1497 and S1514.

It belongs to the G-protein coupled receptor 2 family. Adhesion G-protein coupled receptor (ADGR) subfamily. In terms of assembly, forms a heterodimer, consisting of a large extracellular region (p120) non-covalently linked to a seven-transmembrane moiety (p85). Interacts with syntaxin and with proteins of the SHANK family via the PDZ domain. Isoform 2 interacts with TENM2. Interacts (via extracellular domain) with FLRT1, FLRT2 and FLRT3 (via extracellular domain). In terms of processing, autoproteolytically cleaved into 2 subunits, an extracellular subunit and a seven-transmembrane subunit. This proteolytic processing takes place early in the biosynthetic pathway, either in the endoplasmic reticulum or in the early compartment of the Golgi apparatus. As to expression, expressed in the brain (at protein level). Brain specific distribution but low levels are also detected in most tissues.

It localises to the cell membrane. The protein resides in the cell projection. Its subcellular location is the axon. It is found in the growth cone. The protein localises to the synapse. It localises to the presynaptic cell membrane. The protein resides in the synaptosome. Its function is as follows. Calcium-independent receptor of high affinity for alpha-latrotoxin, an excitatory neurotoxin present in black widow spider venom which triggers massive exocytosis from neurons and neuroendocrine cells. Receptor probably implicated in the regulation of exocytosis. In terms of biological role, receptor for TENM2 that mediates heterophilic synaptic cell-cell contact and postsynaptic specialization. In Rattus norvegicus (Rat), this protein is Adhesion G protein-coupled receptor L1.